Reading from the N-terminus, the 552-residue chain is Phosphoglucomutase (552 aa).

The active-site Phosphoserine intermediate is Ser143. Residues Ser143, Asp295, Asp297, and Asp299 each coordinate Mg(2+).

It belongs to the phosphohexose mutase family. The cofactor is Mg(2+).

It carries out the reaction alpha-D-glucose 1-phosphate = alpha-D-glucose 6-phosphate. It functions in the pathway glycolipid metabolism; diglucosyl-diacylglycerol biosynthesis. In terms of biological role, catalyzes the interconversion between glucose-6-phosphate and alpha-glucose-1-phosphate. This is the first step in the biosynthesis of diglucosyl-diacylglycerol (Glc2-DAG), i.e. the predominant glycolipid found in the S.aureus membrane, which is also used as a membrane anchor for lipoteichoic acid (LTA). The sequence is that of Phosphoglucomutase (pgcA) from Staphylococcus aureus (strain MRSA252).